Here is a 249-residue protein sequence, read N- to C-terminus: 5'-nucleotidase SurE (249 aa).

A divalent metal cation contacts are provided by Asp9, Asp10, Ser40, and Asn92.

It belongs to the SurE nucleotidase family. A divalent metal cation is required as a cofactor.

It is found in the cytoplasm. The enzyme catalyses a ribonucleoside 5'-phosphate + H2O = a ribonucleoside + phosphate. In terms of biological role, nucleotidase that shows phosphatase activity on nucleoside 5'-monophosphates. The protein is 5'-nucleotidase SurE of Shewanella sediminis (strain HAW-EB3).